The sequence spans 720 residues: Viral guanylyltransferase VP3 (720 aa).

It is found in the virion. The enzyme catalyses a 5'-end diphospho-ribonucleoside in mRNA + GTP + H(+) = a 5'-end (5'-triphosphoguanosine)-ribonucleoside in mRNA + diphosphate. The catalysed reaction is a 5'-end (5'-triphosphoguanosine)-ribonucleoside in mRNA + S-adenosyl-L-methionine = a 5'-end (N(7)-methyl 5'-triphosphoguanosine)-ribonucleoside in mRNA + S-adenosyl-L-homocysteine. In terms of biological role, outer capsid protein involved in mRNA capping. Catalyzes the last 3 enzymatic activities for formation of the 5' cap structure on the viral plus-strand transcripts, namely the RNA guanylyltransferase, RNA-7N- and RNA-2'O-methyltransferase activities. The protein is Viral guanylyltransferase VP3 (Segment-3) of Banna virus (BAV).